Consider the following 514-residue polypeptide: Uridylate cyclase (514 aa).

Guanylate cyclase domains lie at 49 to 190 (VHMY…AKLA) and 286 to 428 (VSLY…EKRQ). A ribonucleoside 5'-triphosphate contacts are provided by residues tyrosine 52, arginine 105, phenylalanine 178, 184–188 (NHAAK), and 291–296 (DIDGFT). 3 residues coordinate Ca(2+): aspartate 291, isoleucine 292, and aspartate 339. Aspartate 291 is a Mn(2+) binding site. The tract at residues 495-514 (IRADERQVQPHSRQKVDGSR) is disordered. A compositionally biased stretch (basic and acidic residues) spans 496–514 (RADERQVQPHSRQKVDGSR).

Belongs to the adenylyl cyclase class-4/guanylyl cyclase family. Pyrimidine cyclase subfamily. In terms of assembly, monomer. A divalent metal cation serves as cofactor.

It localises to the cytoplasm. It carries out the reaction UTP = 3',5'-cyclic UMP + diphosphate. Functionally, pycsar (pyrimidine cyclase system for antiphage resistance) provides immunity against bacteriophage. The pyrimidine cyclase (PycC) synthesizes cyclic nucleotides in response to infection; these serve as specific second messenger signals. The signals activate the adjacent effector, leading to bacterial cell death and abortive phage infection. A clade A Pycsar system. The pyrimidine cyclase gene of a two-gene Pycsar system, generates cyclic UMP (cUMP) from UTP, has little to no activity on ATP, CTP or GTP. Expression of this and adjacent effector PaPycTIR (AC P0DV41) probably confers resistance to bacteriophage. The genes are probably only expressed in response to bacteriophage infection. Does not have adenylyl or guanylyl cyclase activity. In Pseudomonas aeruginosa, this protein is Uridylate cyclase.